The chain runs to 1065 residues: RNA2 polyprotein (1065 aa).

Interacts with the large capsid protein. Interacts with the movement protein (via C-terminus). As to quaternary structure, interacts with the small capsid protein. Homomultimer; assembles as pentons. In terms of assembly, interacts (via C-terminus) with the small capsid protein. Specific enzymatic cleavages by picornain 3C-like protease in vivo yield mature proteins.

Its subcellular location is the host endoplasmic reticulum. It is found in the host cell junction. The protein localises to the host plasmodesma. It localises to the virion. In terms of biological role, acts as a suppressor of post-transcriptional gene silencing (PTGS), a mechanism of plant viral defense that limits the accumulation of viral RNAs. Binds ssRNA. Its function is as follows. Transports the viral genome to neighboring plant cells directly through plasmosdesmata, without any budding. The movement protein allows efficient cell to cell propagation, by bypassing the host cell wall barrier. Acts by forming a tubular structure at the host plasmodesmata, enlarging it enough to allow free passage of virion capsids. Binds to GTP and to single-stranded RNA and single-stranded DNA in a non-sequence-specific manner. Also acts as a suppressor of post-transcriptional gene silencing (PTGS), a mechanism of plant viral defense that limits the accumulation of viral RNAs. Together with the small capsid protein, forms an icosahedral capsid (T=3) enclosing the viral positive strand RNA genome, with a diameter of approximately 300 Angstroms. The large capsid protein interacts with the viral RNA. Also acts as a suppressor of post-transcriptional gene silencing (PTGS), a mechanism of plant viral defense that limits the accumulation of viral RNAs. Binds ssRNA. Functionally, together with the large capsid protein, forms an icosahedral capsid (T=3) enclosing the viral positive strand RNA genome, with a diameter of approximately 300 Angstroms. The capsid is formed from 60 copies each of the large and the small capsid protein. The small capsid protein forms the turrets at the fivefold axes of the viral particle. The sequence is that of RNA2 polyprotein from Broad bean wilt virus 2 (BBWV-2).